A 138-amino-acid chain; its full sequence is Putative nickel-responsive regulator (138 aa).

Ni(2+)-binding residues include His78, His89, His91, and Cys97.

Belongs to the transcriptional regulatory CopG/NikR family. It depends on Ni(2+) as a cofactor.

Its function is as follows. Transcriptional regulator. The sequence is that of Putative nickel-responsive regulator from Pyrococcus horikoshii (strain ATCC 700860 / DSM 12428 / JCM 9974 / NBRC 100139 / OT-3).